Here is a 227-residue protein sequence, read N- to C-terminus: Octanoyltransferase (227 aa).

The BPL/LPL catalytic domain maps to 47-223; that stretch reads EDTADEIWLL…HLLRLLPPGV (177 aa). Residues 87–94, 154–156, and 167–169 contribute to the substrate site; these read RGGQITYH, ALG, and GLA. Catalysis depends on C185, which acts as the Acyl-thioester intermediate.

It belongs to the LipB family.

It is found in the cytoplasm. It carries out the reaction octanoyl-[ACP] + L-lysyl-[protein] = N(6)-octanoyl-L-lysyl-[protein] + holo-[ACP] + H(+). The protein operates within protein modification; protein lipoylation via endogenous pathway; protein N(6)-(lipoyl)lysine from octanoyl-[acyl-carrier-protein]: step 1/2. Functionally, catalyzes the transfer of endogenously produced octanoic acid from octanoyl-acyl-carrier-protein onto the lipoyl domains of lipoate-dependent enzymes. Lipoyl-ACP can also act as a substrate although octanoyl-ACP is likely to be the physiological substrate. The sequence is that of Octanoyltransferase from Azoarcus sp. (strain BH72).